Consider the following 61-residue polypeptide: UPF0434 protein PSPPH_1629 (61 aa).

The protein belongs to the UPF0434 family.

The chain is UPF0434 protein PSPPH_1629 from Pseudomonas savastanoi pv. phaseolicola (strain 1448A / Race 6) (Pseudomonas syringae pv. phaseolicola (strain 1448A / Race 6)).